Consider the following 221-residue polypeptide: Casparian strip membrane protein 3 (221 aa).

Over residues 1 to 12 the composition is skewed to basic and acidic residues; sequence MDIEKAGSRREE. Positions 1–27 are disordered; that stretch reads MDIEKAGSRREEEEPIVQRPKLDKGKG. At 1–58 the chain is on the cytoplasmic side; the sequence is MDIEKAGSRREEEEPIVQRPKLDKGKGKAHVFAPPMNYNRIMDKHKQEKMSPAGWKRG. A helical transmembrane segment spans residues 59–79; it reads VAIFDFVLRLIAAITAMAAAA. Topologically, residues 80–109 are extracellular; that stretch reads KMATTEETLPFFTQFLQFQADYTDLPTMSS. A helical transmembrane segment spans residues 110 to 130; sequence FVIVNSIVGGYLTLSLPFSIV. Over 131–148 the chain is Cytoplasmic; that stretch reads CILRPLAVPPRLFLILCD. Residues 149 to 169 traverse the membrane as a helical segment; the sequence is TVMMGLTLMAASASAAIVYLA. The Extracellular portion of the chain corresponds to 170–194; sequence HNGNSSSNWLPVCQQFGDFCQGTSG. Residue Asn173 is glycosylated (N-linked (GlcNAc...) asparagine). A helical membrane pass occupies residues 195–215; it reads AVVASFIAATLLMFLVILSAF. Topologically, residues 216-221 are cytoplasmic; it reads ALKRTT.

This sequence belongs to the Casparian strip membrane proteins (CASP) family. Homodimer and heterodimers with other CASP proteins. Interacts with CASP1, CASP2, CASP4 and CASP5.

It localises to the cell membrane. Functionally, regulates membrane-cell wall junctions and localized cell wall deposition. Required for establishment of the Casparian strip membrane domain (CSD) and the subsequent formation of Casparian strips, a cell wall modification of the root endodermis that determines an apoplastic barrier between the intraorganismal apoplasm and the extraorganismal apoplasm and prevents lateral diffusion. The protein is Casparian strip membrane protein 3 (CASP3) of Arabidopsis thaliana (Mouse-ear cress).